The following is a 352-amino-acid chain: Galactokinase (352 aa).

Residue 14–17 (EHTD) coordinates substrate. ATP-binding positions include serine 46 and 96-102 (GAGLSSS). The Mg(2+) site is built by serine 102 and glutamate 134. The Proton acceptor role is filled by aspartate 146. Tyrosine 196 is a substrate binding site.

Belongs to the GHMP kinase family. GalK subfamily.

It localises to the cytoplasm. It catalyses the reaction alpha-D-galactose + ATP = alpha-D-galactose 1-phosphate + ADP + H(+). Its pathway is carbohydrate metabolism; galactose metabolism. Functionally, catalyzes the transfer of the gamma-phosphate of ATP to D-galactose to form alpha-D-galactose-1-phosphate (Gal-1-P). The polypeptide is Galactokinase (Thermosipho africanus (strain TCF52B)).